A 226-amino-acid chain; its full sequence is MNNHGLKLDNIRRAFKQGKDDLEVLKGANLEIRAGEIVALVGPSGAGKSTLLHIAGLLERPDGGEVFLAGNPAGALGEKERTQLRRLHLGFVYQYHHLLPEFSAIENVVLPQMIAGVPQAKARERAMELLGRMKLAERAEHRPGQLSGGEQQRVAICRALANAPRVLLADEPTGNLDPHTADGVFDELIRLVKGSGVAALIATHNPDLAARMDRVVKMSEGLLVEV.

In terms of domain architecture, ABC transporter spans 6-226 (LKLDNIRRAF…KMSEGLLVEV (221 aa)). 42-49 (GPSGAGKS) provides a ligand contact to ATP.

This sequence belongs to the ABC transporter superfamily. Lipoprotein translocase (TC 3.A.1.125) family. The complex is composed of two ATP-binding proteins (LolD) and two transmembrane proteins (LolC and LolE).

Its subcellular location is the cell inner membrane. Its function is as follows. Part of the ABC transporter complex LolCDE involved in the translocation of mature outer membrane-directed lipoproteins, from the inner membrane to the periplasmic chaperone, LolA. Responsible for the formation of the LolA-lipoprotein complex in an ATP-dependent manner. This Paramagnetospirillum magneticum (strain ATCC 700264 / AMB-1) (Magnetospirillum magneticum) protein is Lipoprotein-releasing system ATP-binding protein LolD.